The sequence spans 341 residues: Binder of USO1 and GRH1 protein 1 (341 aa).

A disordered region spans residues 1 to 181; that stretch reads MSEQESDEVK…AADDLFANDG (181 aa). An N-acetylserine modification is found at serine 2. Residues 2-41 adopt a coiled-coil conformation; it reads SEQESDEVKRMKQLEEARKRVEELKKKKNKKNKGKKNKNS. Positions 7–26 are enriched in basic and acidic residues; it reads DEVKRMKQLEEARKRVEELK. Basic residues predominate over residues 27-39; it reads KKKNKKNKGKKNK. Residues 69-78 are compositionally biased toward polar residues; it reads KANSTKSENN. Residues 79–91 are compositionally biased toward acidic residues; the sequence is DQNDVDEESEEKE. A Phosphoserine modification is found at serine 87. The span at 118–132 shows a compositional bias: basic and acidic residues; that stretch reads GKDDAENTKKEEVQE. Over residues 158–171 the composition is skewed to polar residues; it reads VQTQEGNEPSNTSE. Position 170 is a phosphoserine (serine 170). Residues 188–272 adopt a coiled-coil conformation; the sequence is LTTIKKQKEE…LKLAEAKAAR (85 aa). Phosphothreonine is present on threonine 292.

As to quaternary structure, interacts with GRH1 (via C-terminus), probably forming a heterooligomer consisting of a GRH1 dimer and a BUG1 dimer.

The protein resides in the cytoplasm. The protein localises to the golgi apparatus. Its subcellular location is the cis-Golgi network membrane. In terms of biological role, involved in ER to Golgi vesicle-mediated transport by either facilitating USO1-dependent and -independent tethering or increasing target accuracy of fusion events of COPII-coated vesicles. This chain is Binder of USO1 and GRH1 protein 1, found in Saccharomyces cerevisiae (strain ATCC 204508 / S288c) (Baker's yeast).